An 883-amino-acid polypeptide reads, in one-letter code: Phosphoenolpyruvate carboxylase (883 aa).

Residues H138 and K546 contribute to the active site.

This sequence belongs to the PEPCase type 1 family. It depends on Mg(2+) as a cofactor.

The catalysed reaction is oxaloacetate + phosphate = phosphoenolpyruvate + hydrogencarbonate. Its function is as follows. Forms oxaloacetate, a four-carbon dicarboxylic acid source for the tricarboxylic acid cycle. The protein is Phosphoenolpyruvate carboxylase of Erwinia tasmaniensis (strain DSM 17950 / CFBP 7177 / CIP 109463 / NCPPB 4357 / Et1/99).